The sequence spans 218 residues: Protein THO1 (218 aa).

The SAP domain maps to 4–38 (YSSLTVVQLKDLLTKRNLSVGGLKNELVQRLIKDD). Position 22 is a phosphoserine (serine 22). Disordered regions lie at residues 37–123 (DDEE…LSPE) and 177–218 (LVSR…GYRR). Positions 47–57 (VSPQEQNQEQG) are enriched in polar residues. A phosphoserine mark is found at serine 58 and serine 68. Residues 72-96 (TEKKEVSSEPKETNEPKEENKDVQK) show a composition bias toward basic and acidic residues. Low complexity-rich tracts occupy residues 102–122 (SATA…ALSP) and 186–203 (SGNN…NNRS). Residues 204-218 (RVSKNRRGNRSGYRR) show a composition bias toward basic residues.

The protein belongs to the SAP domain-containing ribonucleoprotein family. Interacts with SUB2 in the presence of RNA; this interaction facilitates RNA binding of SUB2.

Functionally, facilitates RNA binding of SUB2 and likely plays a role in mRNA export. Suppressor of the transcriptional defect of HPR1 by overexpression. In Saccharomyces cerevisiae (strain ATCC 204508 / S288c) (Baker's yeast), this protein is Protein THO1 (THO1).